We begin with the raw amino-acid sequence, 663 residues long: Polyunsaturated fatty acid lipoxygenase ALOX15 (663 aa).

The PLAT domain maps to 2–115 (GLYRVRVSTG…ILSLPEGTGR (114 aa)). One can recognise a Lipoxygenase domain in the interval 116–663 (TVVDDPQGLF…PSLVENSVAI (548 aa)). Positions 361, 366, 541, 545, and 663 each coordinate Fe cation.

The protein belongs to the lipoxygenase family. As to quaternary structure, interacts with PEBP1; in response to IL13/interleukin-13, prevents the interaction of PEBP1 with RAF1 to activate the ERK signaling cascade. It depends on Fe cation as a cofactor. Detected in tracheal epithelium.

Its subcellular location is the cytoplasm. The protein resides in the cytosol. It localises to the cell membrane. It is found in the lipid droplet. The catalysed reaction is (5Z,8Z,11Z,14Z)-eicosatetraenoate + O2 = (12S)-hydroperoxy-(5Z,8Z,10E,14Z)-eicosatetraenoate. The enzyme catalyses (5Z,8Z,11Z,14Z)-eicosatetraenoate + O2 = (15S)-hydroperoxy-(5Z,8Z,11Z,13E)-eicosatetraenoate. It catalyses the reaction (9Z,12Z)-octadecadienoate + O2 = (13S)-hydroperoxy-(9Z,11E)-octadecadienoate. It carries out the reaction (5Z,8Z,11Z,14Z)-eicosatetraenoate + 2 O2 = (14R,15S)-dihydroperoxy-(5Z,8Z,10E,12E)-eicosatetraenoate. The catalysed reaction is (5Z,8Z,11Z,14Z)-eicosatetraenoate + 2 O2 = (8S,15S)-dihydroperoxy-(5Z,9E,11Z,13E)-eicosatetraenoate. The enzyme catalyses (14S,15R)-epoxy-(5Z,8Z,11Z)-eicosatrienoate + O2 = (8S)-hydroperoxy-(14S,15R)-epoxy-(5Z,9E,11Z)-eicosatrienoate. It catalyses the reaction (14S,15R)-epoxy-(5Z,8Z,11Z)-eicosatrienoate + O2 = (12S)-hydroperoxy-(14S,15R)-epoxy-(5Z,8Z,10E)-eicosatrienoate. It carries out the reaction (14R,15S)-epoxy-(5Z,8Z,11Z)-eicosatrienoate + O2 = (5S)-hydroperoxy-(14R,15S)-epoxy-(6E,8Z,11Z)-eicosatrienoate. The catalysed reaction is (14R,15S)-epoxy-(5Z,8Z,11Z)-eicosatrienoate + O2 = (12S)-hydroperoxy-(14R,15S)-epoxy-(5Z,8Z,10E)-eicosatrienoate. The enzyme catalyses (15R)-hydroperoxy-(5Z,8Z,11Z,13E)-eicosatetraenoate = 15-oxo-(5Z,8Z,11Z,13E)-eicosatetraenoate + H2O. It catalyses the reaction (15S)-hydroperoxy-(5Z,8Z,11Z,13E)-eicosatetraenoate = (14S,15S)-epoxy-(5Z,8Z,10E,12E)-eicosatetraenoate + H2O. It carries out the reaction (12S)-hydroperoxy-(5Z,8Z,10E,14Z)-eicosatetraenoate = (8S)-hydroxy-(11S,12S)-epoxy-(5Z,9E,14Z)-eicosatrienoate. The catalysed reaction is (4Z,7Z,10Z,13Z,16Z)-docosapentaenoate + O2 = 14-hydroperoxy-(4Z,7Z,10Z,12E,16Z)-docosapentaenoate. The enzyme catalyses (7Z,10Z,13Z,16Z,19Z)-docosapentaenoate + O2 = 14-hydroperoxy-(7Z,10Z,12E,16Z,19Z)-docosapentaenoate. It catalyses the reaction (4Z,7Z,10Z,13Z,16Z,19Z)-docosahexaenoate + O2 = (14S)-hydroperoxy-(4Z,7Z,10Z,12E,16Z,19Z)-docosahexaenoate. It carries out the reaction (4Z,7Z,10Z,13Z,16Z,19Z)-docosahexaenoate + O2 = (17S)-hydroperoxy-(4Z,7Z,10Z,13Z,15E,19Z)-docosahexaenoate. The catalysed reaction is (7S)-hydroperoxy-(4Z,8E,10Z,13Z,16Z,19Z)-docosahexaenoate + O2 = (7S,14S)-dihydroperoxy-(4Z,8E,10Z,12E,16Z,19Z)-docosahexaenoate. The enzyme catalyses (7S)-hydroperoxy-(4Z,8E,10Z,13Z,16Z,19Z)-docosahexaenoate + O2 = (7S,17S)-dihydroperoxy-(4Z,8E,10Z,13Z,15E,19Z)-docosahexaenoate. It catalyses the reaction (4Z,7Z,10Z,13Z,16Z,19Z)-docosahexaenoate + O2 = (11S)-hydroperoxy-(4Z,7Z,9E,13Z,16Z,19Z)-docosahexaenoate. It carries out the reaction N-(5Z,8Z,11Z,14Z)-eicosatetraenoyl-taurine + O2 = N-(12S)-hydroperoxy-(5Z,8Z,10E,14Z)-eicosatetraenoyl-taurine. The catalysed reaction is N-(5Z,8Z,11Z,14Z)-eicosatetraenoyl-gamma-aminobutanoate + O2 = N-(12S)-hydroperoxy-(5Z,8Z,10E,14Z)-eicosatetraenoyl-gamma-aminobutanoate. The enzyme catalyses N-(5Z,8Z,11Z,14Z)-eicosatetraenoyl-glycine + O2 = N-(12S)-hydroperoxy-(5Z,8Z,10E,14Z)-eicosatetraenoyl-glycine. It catalyses the reaction N-(5Z,8Z,11Z,14Z)-eicosatetraenoyl-L-alanine + O2 = N-(12S)-hydroperoxy-(5Z,8Z,10E,14Z)-eicosatetraenoyl-alanine. It carries out the reaction N-(5Z,8Z,11Z,14Z)-eicosatetraenoyl-taurine + O2 = N-(15S)-hydroperoxy-(5Z,8Z,11Z,13E)-eicosatetraenoyl-taurine. The catalysed reaction is N-(5Z,8Z,11Z,14Z)-eicosatetraenoyl-gamma-aminobutanoate + O2 = N-(15S)-hydroperoxy-(5Z,8Z,11Z,13E)-eicosatetraenoyl-gamma-aminobutanoate. The enzyme catalyses N-(5Z,8Z,11Z,14Z)-eicosatetraenoyl-glycine + O2 = N-(15S)-hydroperoxy-(5Z,8Z,11Z,13E)-eicosatetraenoyl-glycine. It catalyses the reaction N-(5Z,8Z,11Z,14Z)-eicosatetraenoyl-L-alanine + O2 = N-(15S)-hydroperoxy-(5Z,8Z,11Z,13E)-eicosatetraenoyl-alanine. Its pathway is lipid metabolism; hydroperoxy eicosatetraenoic acid biosynthesis. Functionally, non-heme iron-containing dioxygenase that catalyzes the stereo-specific peroxidation of free and esterified polyunsaturated fatty acids generating a spectrum of bioactive lipid mediators. It inserts peroxyl groups at C12 or C15 of arachidonate ((5Z,8Z,11Z,14Z)-eicosatetraenoate) producing both 12-hydroperoxyeicosatetraenoate/12-HPETE and 15-hydroperoxyeicosatetraenoate/15-HPETE. It may then act on 12-HPETE to produce hepoxilins, which may show pro-inflammatory properties. Can also peroxidize linoleate ((9Z,12Z)-octadecadienoate) to 13-hydroperoxyoctadecadienoate. May participate in the sequential oxidations of DHA ((4Z,7Z,10Z,13Z,16Z,19Z)-docosahexaenoate) to generate specialized pro-resolving mediators (SPMs)like resolvin D5 ((7S,17S)-diHPDHA) and (7S,14S)-diHPDHA, that actively down-regulate the immune response and have anti-aggregation properties with platelets. Can convert epoxy fatty acids to hydroperoxy-epoxides derivatives followed by an intramolecular nucleophilic substitution leading to the formation of monocyclic endoperoxides. Plays an important role during the maintenance of self-tolerance by peroxidizing membrane-bound phosphatidylethanolamine which can then signal the sorting process for clearance of apoptotic cells during inflammation and prevent an autoimmune response. In addition to its role in the immune and inflammatory responses, this enzyme may play a role in epithelial wound healing in the cornea through production of lipoxin A4 (LXA(4)) and docosahexaenoic acid-derived neuroprotectin D1 (NPD1; 10R,17S-HDHA), both lipid autacoids exhibit anti-inflammatory and neuroprotective properties. Furthermore, it may regulate actin polymerization which is crucial for several biological processes such as the phagocytosis of apoptotic cells. It is also implicated in the generation of endogenous ligands for peroxisome proliferator activated receptor (PPAR-gamma), hence modulating macrophage development and function. It may also exert a negative effect on skeletal development by regulating bone mass through this pathway. As well as participates in ER stress and downstream inflammation in adipocytes, pancreatic islets, and liver. Finally, it is also involved in the cellular response to IL13/interleukin-13. This Bos taurus (Bovine) protein is Polyunsaturated fatty acid lipoxygenase ALOX15.